A 63-amino-acid chain; its full sequence is DNA-directed RNA polymerase 7 kDa subunit (63 aa).

It belongs to the poxviridae DNA-directed RNA polymerase 7 kDa subunit family. The DNA-dependent RNA polymerase used for intermediate and late genes expression consists of eight subunits 147 kDa, 133 kDa, 35 kDa, 30 kDa, 22 kDa, 19 kDa, 18 kDa and 7 kDa totalling more than 500 kDa in mass. The same holoenzyme, with the addition of the transcription-specificity factor RAP94, is used for early gene expression.

The protein resides in the virion. The catalysed reaction is RNA(n) + a ribonucleoside 5'-triphosphate = RNA(n+1) + diphosphate. In terms of biological role, part of the DNA-dependent RNA polymerase which catalyzes the transcription of viral DNA into RNA using the four ribonucleoside triphosphates as substrates. Responsible for the transcription of early, intermediate and late genes. DNA-dependent RNA polymerase associates with the early transcription factor (ETF) thereby allowing the early genes transcription. Late transcription, and probably also intermediate transcription, require newly synthesized RNA polymerase. This is DNA-directed RNA polymerase 7 kDa subunit (RPO7) from Rabbit fibroma virus (strain Kasza) (RFV).